The following is a 184-amino-acid chain: Ribosome maturation factor RimM (184 aa).

The 74-residue stretch at 101–174 folds into the PRC barrel domain; sequence PDEYYDHQLV…RVVIADRPGL (74 aa).

Belongs to the RimM family. As to quaternary structure, binds ribosomal protein uS19.

Its subcellular location is the cytoplasm. An accessory protein needed during the final step in the assembly of 30S ribosomal subunit, possibly for assembly of the head region. Essential for efficient processing of 16S rRNA. May be needed both before and after RbfA during the maturation of 16S rRNA. It has affinity for free ribosomal 30S subunits but not for 70S ribosomes. In Nocardioides sp. (strain ATCC BAA-499 / JS614), this protein is Ribosome maturation factor RimM.